A 224-amino-acid chain; its full sequence is MELYETSPYFYQEPHFYDGENYLPVHLQGFEPPGYERTELSLSPEARGPLEEKGLGTPEHCPGQCLPWACKVCKRKSVSVDRRRAATLREKRRLKKVNEAFEALKRSTLLNPNQRLPKVEILRSAIQYIERLQALLSSLNQEERDLRYRGGGGPQPMVPSECNSHSASCSPEWGNALEFGPNPGDHLLAADPTDAHNLHSLTSIVDSITVEDMSVAFPDETMPN.

2 positions are modified to phosphoserine; by CaMK2G: Ser-77 and Ser-79. Positions 81-132 (DRRRAATLREKRRLKKVNEAFEALKRSTLLNPNQRLPKVEILRSAIQYIERL) constitute a bHLH domain. The residue at position 87 (Thr-87) is a Phosphothreonine; by CaMK2G.

As to quaternary structure, homodimer and heterodimer with E12; heterodimerization enhances MYOG DNA-binding and transcriptional activities. Interacts with SMARCA4/BRG1/BAF190A. Interacts (via C-terminal region) with SSRP1 and SUPT16H; the interaction is indicative of an interaction with the FACT complex. nteracts with CSRP3. Phosphorylated by CAMK2G on threonine and serine amino acids in a muscle activity-dependent manner. Phosphorylation of Thr-87 impairs both DNA-binding and trans-activation functions in contracting muscles. Expressed in myoblast cells. Expressed weakly in myotubes (at protein level). Expressed strongly in denervated muscles and in satellite cells isolated from denervated muscles. Expressed weakly in innervated muscle and in satellite cells isolated from innervated muscles.

The protein localises to the nucleus. Its function is as follows. Acts as a transcriptional activator that promotes transcription of muscle-specific target genes and plays a role in muscle differentiation, cell cycle exit and muscle atrophy. Essential for the development of functional embryonic skeletal fiber muscle differentiation. However is dispensable for postnatal skeletal muscle growth; phosphorylation by CAMK2G inhibits its transcriptional activity in respons to muscle activity. Required for the recruitment of the FACT complex to muscle-specific promoter regions, thus promoting gene expression initiation. During terminal myoblast differentiation, plays a role as a strong activator of transcription at loci with an open chromatin structure previously initiated by MYOD1. Together with MYF5 and MYOD1, co-occupies muscle-specific gene promoter core regions during myogenesis. Also cooperates with myocyte-specific enhancer factor MEF2D and BRG1-dependent recruitment of SWI/SNF chromatin-remodeling enzymes to alter chromatin structure at myogenic late gene promoters. Facilitates cell cycle exit during terminal muscle differentiation through the up-regulation of miR-20a expression, which in turn represses genes involved in cell cycle progression. Binds to the E-box containing (E1) promoter region of the miR-20a gene. Also plays a role in preventing reversal of muscle cell differentiation. Contributes to the atrophy-related gene expression in adult denervated muscles. Induces fibroblasts to differentiate into myoblasts. This is Myogenin (Myog) from Mus musculus (Mouse).